The sequence spans 209 residues: HTLV-1 basic zipper factor (209 aa).

The segment at 48 to 162 (DGLLSLEEES…SARKEKMQEL (115 aa)) is disordered. 2 stretches are compositionally biased toward basic and acidic residues: residues 70–87 (APPR…AEEK) and 94–114 (REKE…EEKA). The Nuclear localization signal 1 signature appears at 87–92 (KRKRKK). Short sequence motifs (nuclear localization signal) lie at residues 116 to 120 (RRRRA) and 137 to 141 (RRERK). Over residues 122–160 (KKAADVARRKQEEQERRERKWRQGAEKAKQHSARKEKMQ) the composition is skewed to basic and acidic residues.

This sequence belongs to the HTLV-1 HBZ protein family. Interacts with host ATF4; this interaction inhibits viral RNA transcriptional activation by preventing ATF4 binding to Tax-responsive elements. Interacts with host CREB1; this interaction inhibits host CREB1 transcriptional activity. Interacts with host JUN, JUNB and JUND. Interacts with host EP300.

The protein localises to the host nucleus. Contributes to the regulation of viral RNA transcription by interacting with host proteins involved in transcriptional activation such as ATF4, or CREB1, and by inhibiting their activity. Additionally, HBZ suppresses host NF-kappa-B-driven transcription mediated by host RELA as well as transcription of some classical NF-kappa-B target genes, including IL8, IL2RA, IRF4, VCAM1, and VEGFA. This is HTLV-1 basic zipper factor (HBZ) from Homo sapiens (Human).